Reading from the N-terminus, the 183-residue chain is Photosystem I assembly protein Ycf4 (183 aa).

The next 2 helical transmembrane spans lie at Trp23–Phe43 and Val64–Ile84.

It belongs to the Ycf4 family.

The protein localises to the plastid. It localises to the chloroplast thylakoid membrane. Seems to be required for the assembly of the photosystem I complex. This Stigeoclonium helveticum (Green alga) protein is Photosystem I assembly protein Ycf4.